The primary structure comprises 435 residues: Cysteine--tRNA ligase (435 aa).

C24 contributes to the Zn(2+) binding site. Residues 26–36 (PTVYDHIHIGN) carry the 'HIGH' region motif. Residues C202, H228, and E232 each coordinate Zn(2+). The 'KMSKS' region signature appears at 260-264 (KMSKS). Position 263 (K263) interacts with ATP.

Belongs to the class-I aminoacyl-tRNA synthetase family. In terms of assembly, monomer. Zn(2+) is required as a cofactor.

The protein resides in the cytoplasm. The enzyme catalyses tRNA(Cys) + L-cysteine + ATP = L-cysteinyl-tRNA(Cys) + AMP + diphosphate. The sequence is that of Cysteine--tRNA ligase from Mycoplasmoides gallisepticum (strain R(low / passage 15 / clone 2)) (Mycoplasma gallisepticum).